A 460-amino-acid polypeptide reads, in one-letter code: Putative arginine/ornithine antiporter (460 aa).

Topologically, residues methionine 1 to lysine 4 are cytoplasmic. Residues leucine 5–serine 25 form a helical membrane-spanning segment. Over leucine 26–alanine 38 the chain is Periplasmic. Residues leucine 39–isoleucine 59 form a helical membrane-spanning segment. Residues leucine 60–tryptophan 92 lie on the Cytoplasmic side of the membrane. A helical membrane pass occupies residues leucine 93 to phenylalanine 113. Residues threonine 114 to glycine 125 are Periplasmic-facing. Residues asparagine 126–leucine 146 traverse the membrane as a helical segment. At arginine 147–leucine 157 the chain is on the cytoplasmic side. The chain crosses the membrane as a helical span at residues valine 158–phenylalanine 178. At lysine 179–lysine 201 the chain is on the periplasmic side. Residues asparagine 202 to alanine 222 form a helical membrane-spanning segment. Residues arginine 223–leucine 235 lie on the Cytoplasmic side of the membrane. The helical transmembrane segment at leucine 236–valine 256 threads the bilayer. The Periplasmic segment spans residues alanine 257–glutamate 282. Residues isoleucine 283 to methionine 303 form a helical membrane-spanning segment. Residues alanine 304 to serine 331 are Cytoplasmic-facing. A helical membrane pass occupies residues alanine 332 to glycine 352. Residues serine 353–threonine 357 are Periplasmic-facing. A helical transmembrane segment spans residues leucine 358 to leucine 378. At lysine 379–proline 384 the chain is on the cytoplasmic side. The next 2 helical transmembrane spans lie at leucine 385–glycine 405 and proline 406–alanine 426. Residues arginine 427 to glutamine 439 lie on the Cytoplasmic side of the membrane. Residues glutamate 440–glycine 460 form a helical membrane-spanning segment.

The protein belongs to the amino acid-polyamine-organocation (APC) superfamily. Basic amino acid/polyamine antiporter (APA) (TC 2.A.3.2) family.

The protein localises to the cell inner membrane. The catalysed reaction is L-ornithine(in) + L-arginine(out) = L-ornithine(out) + L-arginine(in). Catalyzes electroneutral exchange between arginine and ornithine to allow high-efficiency energy conversion in the arginine deiminase pathway. The polypeptide is Putative arginine/ornithine antiporter (ydgI) (Escherichia coli O6:H1 (strain CFT073 / ATCC 700928 / UPEC)).